The primary structure comprises 167 residues: uncharacterized protein (167 aa).

This sequence to A.aeolicus aq_328.

This is an uncharacterized protein from Aquifex aeolicus (strain VF5).